The sequence spans 36 residues: Photosystem I reaction center subunit VIII (36 aa).

Residues 7-29 traverse the membrane as a helical segment; the sequence is PSILVPLVGIIFPGISMALLFIY.

The protein belongs to the PsaI family.

Its subcellular location is the plastid. The protein resides in the chloroplast thylakoid membrane. Its function is as follows. May help in the organization of the PsaL subunit. The polypeptide is Photosystem I reaction center subunit VIII (Gracilaria tenuistipitata var. liui (Red alga)).